A 236-amino-acid chain; its full sequence is Translocon-associated protein subunit alpha (236 aa).

Residues 1 to 20 (MNKLITLLLAVLMIISCVYS) form the signal peptide. The Lumenal portion of the chain corresponds to 21–163 (DDVEITDDEV…TEKETSFDMD (143 aa)). N-linked (GlcNAc...) asparagine glycans are attached at residues N74, N94, N141, N148, and N152. Residues 164-184 (SFFLILLGLGFVGGIGYIVYG) traverse the membrane as a helical segment. Residues 185-236 (KMPKQKKVRTVSKVNKNAVRVETEDETAEWLSGTSAASSKVKSVQKVVKKNK) are Cytoplasmic-facing.

It belongs to the TRAP-alpha family. As to quaternary structure, heterotrimer of TRAP-alpha, TRAP-beta and TRAP-gamma. Post-translationally, phosphorylated in its cytoplasmic tail.

It is found in the endoplasmic reticulum membrane. Its function is as follows. TRAP proteins are part of a complex whose function is to bind calcium to the ER membrane and thereby regulate the retention of ER resident proteins. The sequence is that of Translocon-associated protein subunit alpha (ssr1) from Dictyostelium discoideum (Social amoeba).